A 1451-amino-acid chain; its full sequence is Fanconi anemia group D2 protein (1451 aa).

The segment at 1–37 (MVSKRRLSKSEDKESLTEDASKTRKQPLSKKTKKSHI) is disordered. Residues 1–291 (MVSKRRLSKS…IKFILHSVTA (291 aa)) form an interaction with FANCE region. Position 8 is a phosphoserine (Ser8). Residues 8–22 (SKSEDKESLTEDASK) are compositionally biased toward basic and acidic residues. Positions 23–36 (TRKQPLSKKTKKSH) are enriched in basic residues. Residue Ser222 is modified to Phosphoserine; by ATM. Residues 248 to 359 (VLSSLRLDPN…IKSAIRYEKT (112 aa)) form an interaction with BRCA2 region. Residue Lys561 forms a Glycyl lysine isopeptide (Lys-Gly) (interchain with G-Cter in ubiquitin) linkage. Residues Ser592, Ser594, and Ser717 each carry the phosphoserine modification. The tract at residues 868-906 (IERKQKTDGSKTSSSDTLSEEKNSECDPTPSHRGQLNKE) is disordered. Ser1257 is subject to Phosphoserine. Positions 1396–1451 (GEEIKSQNSQESTADESEDDMSSQASKSKATEDGEEDEVSAGEKEQDSDESYDDSD) are disordered. 2 positions are modified to phosphoserine; by ATM: Ser1401 and Ser1404. Ser1412 and Ser1423 each carry phosphoserine. Thr1426 is modified (phosphothreonine). The span at 1428 to 1451 (DGEEDEVSAGEKEQDSDESYDDSD) shows a compositional bias: acidic residues. Ser1435 carries the phosphoserine modification.

This sequence belongs to the Fanconi anemia protein FANCD2 family. As to quaternary structure, homodimer; cannot be ubiquitinated and does not bind DNA. Part of a FANCI-FANCD2 heterodimeric complex that binds and scans dsDNA for DNA damage. Interacts directly with FANCE and FANCI. Interacts with USP1 and MEN1. The ubiquitinated form specifically interacts with BRCA1 and BLM. Both the nonubiquitinated and the monoubiquitinated forms interact with BRCA2; this interaction is mediated by phosphorylated FANCG and the complex also includes XCCR3. The ubiquitinated form specifically interacts with MTMR15/FAN1 (via UBZ-type zinc finger), leading to recruit MTMR15/FAN1 to sites of DNA damage. Interacts with DCLRE1B/Apollo. Interacts with POLN. Interacts with UHRF1 and UHRF2; these interactions promote FANCD2 activation. Post-translationally, monoubiquitinated on Lys-561 during S phase and upon genotoxic stress by FANCL in complex with E2 ligases UBE2T or UBE2W (isoform 1 and isoform 2). Deubiquitinated by USP1 as cells enter G2/M, or once DNA repair is completed. Monoubiquitination requires the joint intervention of the FANC core complex, including FANCA, FANCB, FANCC, FANCE, FANCF, FANCG, and FANCM, and proteins involved in cell cycle checkpoints and DNA repair, including RPA1, ATR, CHEK1 and BRCA1, and is mediated by FANCL/PHF9. Monoubiquitination prevents DNA release from the FANCI-FANCD2 complex. FANCD2 is only ubiquitinated in the FANCI-FANCD2 complex and the monoubiquitination of FANCD2 is promoted by phosphorylation of FANCI. Ubiquitination is required for binding to chromatin, interaction with BRCA1, BRCA2 and MTMR15/FAN1, DNA repair, and normal cell cycle progression, but not for phosphorylation on Ser-222 or interaction with MEN1. In terms of processing, phosphorylated in response to various genotoxic stresses by ATM and/or ATR. Upon ionizing radiation, phosphorylated by ATM on Ser-222 and Ser-1404. Phosphorylation on Ser-222 is required for S-phase checkpoint activation, but not for ubiquitination, foci formation, or DNA repair. In contrast, phosphorylation by ATR on other sites may be required for ubiquitination and foci formation. Highly expressed in germinal center cells of the spleen, tonsil, and reactive lymph nodes, and in the proliferating basal layer of squamous epithelium of tonsil, esophagus, oropharynx, larynx and cervix. Expressed in cytotrophoblastic cells of the placenta and exocrine cells of the pancreas (at protein level). Highly expressed in testis, where expression is restricted to maturing spermatocytes.

Its subcellular location is the nucleus. In terms of biological role, required for maintenance of chromosomal stability. Promotes accurate and efficient pairing of homologs during meiosis. Involved in the repair of DNA double-strand breaks, both by homologous recombination and single-strand annealing. The FANCI-FANCD2 complex binds and scans double-stranded DNA (dsDNA) for DNA damage; this complex stalls at DNA junctions between double-stranded DNA and single-stranded DNA. May participate in S phase and G2 phase checkpoint activation upon DNA damage. Plays a role in preventing breakage and loss of missegregating chromatin at the end of cell division, particularly after replication stress. Required for the targeting, or stabilization, of BLM to non-centromeric abnormal structures induced by replicative stress. Promotes BRCA2/FANCD1 loading onto damaged chromatin. May also be involved in B-cell immunoglobulin isotype switching. The sequence is that of Fanconi anemia group D2 protein (FANCD2) from Homo sapiens (Human).